Consider the following 337-residue polypeptide: Probable cytosolic iron-sulfur protein assembly protein Ciao1 (337 aa).

WD repeat units lie at residues 12-51 (GHRG…RWVA), 58-97 (GHSR…FECN), 102-141 (GHEN…EYEC), 147-186 (THTQ…SDWS), 193-232 (SHES…NEFG), 251-290 (YHSR…SPHE), and 301-337 (AHSQ…EPEE).

Belongs to the WD repeat CIA1 family.

Functionally, essential component of the cytosolic iron-sulfur (Fe/S) protein assembly machinery. Required for the maturation of extramitochondrial Fe/S proteins. The sequence is that of Probable cytosolic iron-sulfur protein assembly protein Ciao1 from Aedes aegypti (Yellowfever mosquito).